The primary structure comprises 580 residues: Serine/threonine-protein kinase srk1 (580 aa).

A compositionally biased stretch (polar residues) spans 51–61 (VADSTQNPTSK). Residues 51–91 (VADSTQNPTSKPKSRHAHFHETVHENPSEYSRSKCKQPTNE) form a disordered region. The 298-residue stretch at 124–421 (YTLLQKMGDG…IHQFLAHPWI (298 aa)) folds into the Protein kinase domain. Residues 130-138 (MGDGAFSNV) and K153 contribute to the ATP site. D257 functions as the Proton acceptor in the catalytic mechanism. The interval 530–580 (NLSGENDPSLASRQPAQSQQQSSQRSRNKFKGFQLNLSKATLYNRRHRQKV) is disordered. A compositionally biased stretch (low complexity) spans 537-554 (PSLASRQPAQSQQQSSQR).

The protein belongs to the protein kinase superfamily. CAMK Ser/Thr protein kinase family. CaMK subfamily. It depends on Mg(2+) as a cofactor. Post-translationally, phosphorylated by sty1.

The protein localises to the cytoplasm. It is found in the nucleus. Its subcellular location is the nucleolus. The protein resides in the spore core. It carries out the reaction L-seryl-[protein] + ATP = O-phospho-L-seryl-[protein] + ADP + H(+). It catalyses the reaction L-threonyl-[protein] + ATP = O-phospho-L-threonyl-[protein] + ADP + H(+). Delays the mitotic G2/M transition by promoting nuclear exclusion of cdc25. During osmotic stress, inhibits the G2/M transition in a sty1 stress-activated MAPK pathway-dependent manner. The sequence is that of Serine/threonine-protein kinase srk1 from Schizosaccharomyces pombe (strain 972 / ATCC 24843) (Fission yeast).